The sequence spans 469 residues: MNKLSGGGGRRTRVEGGQLGGEEWTRHGSFVNKPTRGWLHPNDKVMGPGVSYLVRYMGCVEVLQSMRALDFNTRTQVTREAISLVCEAVPGAKGAMRRRKPCSRPLSSILGRSNLKFAGMPITLTVSTSSLNLMAADCKQIIANHHMQSISFASGGDPDTAEYVAYVAKDPVNQRACHILECPEGLAQDVISTIGQAFELRFKQYLRNPPKLVTPHDRMAGFDGSAWDEEEEELPDHQYYNDFPGKEPPLGGVVDMRLREGAARPTLPSTQMPSHLGATLPIGQHVTGDHEVRKQMLPPPPCPGRELFDDPSYVNIQNLDKARQAGGGAGPPNPSVNGSAPRDLFDMKPFEDALRVPPAPQSMSMAEQLQGESWFHGKLSRREAEALLQLNGDFLVRESTTTPGQYVLTGLQSGQPKHLLLVDPEGVVRTKDHRFESVSHLISYHMDNHLPIISAGSELCLQQPVDRKV.

Positions 1–26 (MNKLSGGGGRRTRVEGGQLGGEEWTR) are disordered. S29 carries the phosphoserine modification. At K44 the chain carries N6-acetyllysine. The PID domain occupies 46 to 229 (MGPGVSYLVR…AGFDGSAWDE (184 aa)). Positions 230 to 373 (EEEELPDHQY…SMAEQLQGES (144 aa)) are CH1. Phosphotyrosine is present on residues Y239, Y240, and Y313. The interval 322 to 344 (ARQAGGGAGPPNPSVNGSAPRDL) is disordered. S339 carries the post-translational modification Phosphoserine. In terms of domain architecture, SH2 spans 374-465 (WFHGKLSRRE…GSELCLQQPV (92 aa)).

As to quaternary structure, interacts with CPNE3; this interaction may mediate the binding of CPNE3 with ERBB2. Interacts with the NPXY motif of tyrosine-phosphorylated IGF1R and INSR in vitro via the PID domain. Once activated, binds to GRB2. Interacts with tyrosine-phosphorylated CD3T and DDR2. Interacts with the N-terminal region of APS. Interacts with phosphorylated LRP1 and IRS4. Interacts with INPP5D/SHIP1 and INPPL1/SHIP2. Interacts with ALK, GAB2, GRB7 and KIT. Interacts with PTPN6/SHP (tyrosine phosphorylated). Identified in a complex containing FGFR4, NCAM1, CDH2, PLCG1, FRS2A, SRC, SHC1, GAP43 and CTTN. Interacts with EPHB1 and GRB2; activates the MAPK/ERK cascade to regulate cell migration. Interacts with PDGFRB (tyrosine-phosphorylated). Interacts with ERBB4. Interacts with TEK/TIE2 (tyrosine-phosphorylated). Interacts with PTK2/FAK1. Interacts with FLT4 (tyrosine-phosphorylated). Interacts with the Trk receptors NTRK1, NTRK2 and NTRK3; in a phosphotyrosine-dependent manner. Interacts with CEACAM1; this interaction is CEACAM1-phosphorylation-dependent and mediates interaction with EGFR or INSR resulting in decrease coupling of SHC1 to the MAPK3/ERK1-MAPK1/ERK2 pathway. Interacts (via PID domain) with PEAK1 (when phosphorylated). Found in a complex with PPP1CA, PPP1CC, SHC1 and PEAK1. Phosphorylated by activated epidermal growth factor receptor. Phosphorylated in response to KIT signaling. Tyrosine phosphorylated in response to FLT3 signaling and by ligand-activated ALK. Tyrosine phosphorylated by TEK/TIE2. Tyrosine phosphorylated by ligand-activated PDGFRB. May be tyrosine phosphorylated by activated PTK2/FAK1. Dephosphorylation by PTPN2 may regulate interaction with GRB2. Phosphorylated in response to FLT4 signaling. Tyrosine phosphorylated by activated PTK2B/PYK2.

Its subcellular location is the cytoplasm. It localises to the cell junction. It is found in the focal adhesion. Functionally, signaling adapter that couples activated growth factor receptors to signaling pathways. Participates in a signaling cascade initiated by activated KIT and KITLG/SCF. Participates in signaling downstream of the angiopoietin receptor TEK/TIE2, and plays a role in the regulation of endothelial cell migration and sprouting angiogenesis. The polypeptide is SHC-transforming protein 1 (Shc1) (Rattus norvegicus (Rat)).